Here is a 197-residue protein sequence, read N- to C-terminus: Isopentenyl-diphosphate Delta-isomerase (197 aa).

Mn(2+)-binding residues include H41 and H48. Residues 46–183 (QLHRAFSVFL…SWFMTVLDAA (138 aa)) enclose the Nudix hydrolase domain. C83 is an active-site residue. Residue C83 coordinates Mg(2+). Residue H85 participates in Mn(2+) binding. E103 is a binding site for Mg(2+). Residues E130 and E132 each coordinate Mn(2+). E132 is an active-site residue.

It belongs to the IPP isomerase type 1 family. It depends on Mg(2+) as a cofactor. Mn(2+) is required as a cofactor.

It is found in the cytoplasm. The catalysed reaction is isopentenyl diphosphate = dimethylallyl diphosphate. It participates in isoprenoid biosynthesis; dimethylallyl diphosphate biosynthesis; dimethylallyl diphosphate from isopentenyl diphosphate: step 1/1. Functionally, catalyzes the 1,3-allylic rearrangement of the homoallylic substrate isopentenyl (IPP) to its highly electrophilic allylic isomer, dimethylallyl diphosphate (DMAPP). The sequence is that of Isopentenyl-diphosphate Delta-isomerase from Streptomyces avermitilis (strain ATCC 31267 / DSM 46492 / JCM 5070 / NBRC 14893 / NCIMB 12804 / NRRL 8165 / MA-4680).